Reading from the N-terminus, the 367-residue chain is MRRMLVIRWILAIHLIATQVFAERIKDIATLAGVRVNQLVGYGLVVGLSGTGDKTGTKFTEDSFANMLTQLGINIPPGVRLNSKNIAAVMVTANLSSFMKKGQTMDVNISSIGDSKSLLGGTLLLTPLKGADGRVYAMSQGNVVVSGISASGSDGSSVTVNVPSGGRIPNGATIEADIPNPFYYSNSLTYNLHNPDFTTAKRMSDAINELMGPGTAKAIDAGSVVVTAPKKLSQRVDYVSVLENIEFKPGEAMAKIIINARTGTVVISSNVIVKSAAVSHGNLVVSITETPVISQPNAFASGRTVSTQQSQVNIQQKNNRAFILPKGTTLKDIVRGINAVGATPADVISILEALQQAGALSATLIVI.

Residues 1–22 (MRRMLVIRWILAIHLIATQVFA) form the signal peptide.

The protein belongs to the FlgI family. In terms of assembly, the basal body constitutes a major portion of the flagellar organelle and consists of four rings (L,P,S, and M) mounted on a central rod.

The protein resides in the periplasm. It is found in the bacterial flagellum basal body. Functionally, assembles around the rod to form the L-ring and probably protects the motor/basal body from shearing forces during rotation. The protein is Flagellar P-ring protein of Legionella pneumophila subsp. pneumophila (strain Philadelphia 1 / ATCC 33152 / DSM 7513).